A 61-amino-acid polypeptide reads, in one-letter code: Protein stunted (61 aa).

The tract at residues Ala3 to Ser15 is sufficient for mth activation.

The protein belongs to the eukaryotic ATPase epsilon family.

Its function is as follows. Activates the G-protein coupled receptor mth in vitro, leading to increased intracellular calcium ion levels. This chain is Protein stunted, found in Drosophila melanogaster (Fruit fly).